A 268-amino-acid chain; its full sequence is Oxygen-evolving enhancer protein 2-1, chloroplastic (268 aa).

The N-terminal 82 residues, 1–82, are a transit peptide targeting the chloroplast; the sequence is MASTQCFLHQ…IGSKVSPADA (82 aa).

Belongs to the PsbP family.

The protein localises to the plastid. The protein resides in the chloroplast thylakoid membrane. In terms of biological role, may be involved in the regulation of photosystem II. This Nicotiana tabacum (Common tobacco) protein is Oxygen-evolving enhancer protein 2-1, chloroplastic (PSBP1).